The following is a 143-amino-acid chain: Large ribosomal subunit protein uL13 (143 aa).

It belongs to the universal ribosomal protein uL13 family. As to quaternary structure, part of the 50S ribosomal subunit.

Functionally, this protein is one of the early assembly proteins of the 50S ribosomal subunit, although it is not seen to bind rRNA by itself. It is important during the early stages of 50S assembly. This chain is Large ribosomal subunit protein uL13, found in Neisseria gonorrhoeae (strain ATCC 700825 / FA 1090).